The primary structure comprises 368 residues: uncharacterized protein (368 aa).

Residues 3–120 (KILLADDERI…QIISSLEEII (118 aa)) form the Response regulatory domain. Residue Asp-55 is modified to 4-aspartylphosphate. The HTH araC/xylS-type domain occupies 259–361 (SKMIRLIADE…GLTPSEFRRK (103 aa)). 2 consecutive DNA-binding regions (H-T-H motif) follow at residues 278 to 299 (WAAKDMLFMNPDYLGKLFKQET) and 327 to 351 (VSEIAEEIGFGDNPKYFSLVFKKYT).

Phosphorylated by YesM.

It localises to the cytoplasm. Its function is as follows. Member of the two-component regulatory system YesM/YesN. This is an uncharacterized protein from Bacillus subtilis (strain 168).